We begin with the raw amino-acid sequence, 548 residues long: Glucose-6-phosphate isomerase (548 aa).

The Proton donor role is filled by Glu355. Catalysis depends on residues His386 and Lys514.

The protein belongs to the GPI family.

The protein resides in the cytoplasm. The catalysed reaction is alpha-D-glucose 6-phosphate = beta-D-fructose 6-phosphate. It participates in carbohydrate biosynthesis; gluconeogenesis. It functions in the pathway carbohydrate degradation; glycolysis; D-glyceraldehyde 3-phosphate and glycerone phosphate from D-glucose: step 2/4. In terms of biological role, catalyzes the reversible isomerization of glucose-6-phosphate to fructose-6-phosphate. This chain is Glucose-6-phosphate isomerase, found in Yersinia pestis (strain Pestoides F).